A 118-amino-acid chain; its full sequence is NADPH-dependent 7-cyano-7-deazaguanine reductase (118 aa).

The active-site Thioimide intermediate is the C31. D38 functions as the Proton donor in the catalytic mechanism. Residues 53 to 55 and 72 to 73 each bind substrate; these read VEL and YE.

This sequence belongs to the GTP cyclohydrolase I family. QueF type 1 subfamily.

The protein localises to the cytoplasm. It catalyses the reaction 7-aminomethyl-7-carbaguanine + 2 NADP(+) = 7-cyano-7-deazaguanine + 2 NADPH + 3 H(+). Its pathway is tRNA modification; tRNA-queuosine biosynthesis. Its function is as follows. Catalyzes the NADPH-dependent reduction of 7-cyano-7-deazaguanine (preQ0) to 7-aminomethyl-7-deazaguanine (preQ1). The protein is NADPH-dependent 7-cyano-7-deazaguanine reductase of Chlorobium phaeobacteroides (strain BS1).